The sequence spans 1266 residues: Rho GTPase-activating protein 29 (1266 aa).

S166, S171, S174, and S185 each carry phosphoserine. In terms of domain architecture, F-BAR spans 187–457; sequence IELDNLLLKN…SAKLYDPGQE (271 aa). Residues 291 to 413 are a coiled coil; that stretch reads RKNEMEKQRK…EILTQLRTLV (123 aa). Phosphoserine is present on residues S496, S516, and S549. Residues 538–556 show a composition bias toward low complexity; sequence SESTGGSSESRSLDSESIS. The segment at 538–596 is disordered; the sequence is SESTGGSSESRSLDSESISPGDFHRKLPRTPSSGTMSSADDLDEREPPSPSEAGPNSLG. The Phorbol-ester/DAG-type zinc finger occupies 609–654; sequence THKFRKLRSPTKCRDCEGIVMFPGVECEECLLVCHRKCLENLVIVC. Residues 668–883 form the Rho-GAP domain; the sequence is AEFIQVAKKE…FLITYAQKIF (216 aa). Residues S915, S951, and S1023 each carry the phosphoserine modification. 3 disordered regions span residues 1033–1054, 1114–1153, and 1222–1248; these read AGSP…KFGK, VSTG…DSCP, and VQTS…QRPR. Positions 1115–1127 are enriched in polar residues; the sequence is STGNNRGHSSGAA. The segment covering 1132-1148 has biased composition (basic and acidic residues); the sequence is AHADPARSARDTSEHSS. 2 positions are modified to phosphoserine: S1149 and S1151. The interval 1263-1266 is interaction with PTPN13/PTPL1; that stretch reads PQFV.

Interacts with PTPN13/PTPL1. Interacts with RAP2A via its coiled coil domain. Interacts with RASIP1.

Its function is as follows. GTPase activator for the Rho-type GTPases by converting them to an inactive GDP-bound state. Has strong activity toward RHOA, and weaker activity toward RAC1 and CDC42. May act as a specific effector of RAP2A to regulate Rho. In concert with RASIP1, suppresses RhoA signaling and dampens ROCK and MYH9 activities in endothelial cells and plays an essential role in blood vessel tubulogenesis. The sequence is that of Rho GTPase-activating protein 29 (Arhgap29) from Rattus norvegicus (Rat).